We begin with the raw amino-acid sequence, 286 residues long: ATP synthase gamma chain (286 aa).

Belongs to the ATPase gamma chain family. As to quaternary structure, F-type ATPases have 2 components, CF(1) - the catalytic core - and CF(0) - the membrane proton channel. CF(1) has five subunits: alpha(3), beta(3), gamma(1), delta(1), epsilon(1). CF(0) has three main subunits: a, b and c.

It localises to the cell inner membrane. In terms of biological role, produces ATP from ADP in the presence of a proton gradient across the membrane. The gamma chain is believed to be important in regulating ATPase activity and the flow of protons through the CF(0) complex. The sequence is that of ATP synthase gamma chain from Pseudomonas syringae pv. tomato (strain ATCC BAA-871 / DC3000).